A 207-amino-acid chain; its full sequence is Pyridoxine/pyridoxamine 5'-phosphate oxidase (207 aa).

Residues 53 to 58 (RMVLLK), 68 to 69 (YT), lysine 75, and glutamine 97 contribute to the FMN site. Lysine 58 serves as a coordination point for substrate. The substrate site is built by tyrosine 115, arginine 119, and serine 123. FMN contacts are provided by residues 132 to 133 (QS) and tryptophan 177. 183–185 (RLH) lines the substrate pocket. Arginine 187 is a binding site for FMN.

Belongs to the pyridoxamine 5'-phosphate oxidase family. As to quaternary structure, homodimer. FMN is required as a cofactor.

It carries out the reaction pyridoxamine 5'-phosphate + O2 + H2O = pyridoxal 5'-phosphate + H2O2 + NH4(+). The catalysed reaction is pyridoxine 5'-phosphate + O2 = pyridoxal 5'-phosphate + H2O2. It participates in cofactor metabolism; pyridoxal 5'-phosphate salvage; pyridoxal 5'-phosphate from pyridoxamine 5'-phosphate: step 1/1. The protein operates within cofactor metabolism; pyridoxal 5'-phosphate salvage; pyridoxal 5'-phosphate from pyridoxine 5'-phosphate: step 1/1. In terms of biological role, catalyzes the oxidation of either pyridoxine 5'-phosphate (PNP) or pyridoxamine 5'-phosphate (PMP) into pyridoxal 5'-phosphate (PLP). The sequence is that of Pyridoxine/pyridoxamine 5'-phosphate oxidase from Bartonella quintana (strain Toulouse) (Rochalimaea quintana).